The following is a 335-amino-acid chain: Tryptophan--tRNA ligase (335 aa).

Residues 13-15 and 21-22 each bind ATP; these read QPS and GN. A 'HIGH' region motif is present at residues 14-22; sequence PSGNLTIGN. L-tryptophan is bound at residue aspartate 136. ATP-binding positions include 148 to 150, isoleucine 187, and 196 to 200; these read GQD and KMSKS. Residues 196-200 carry the 'KMSKS' region motif; it reads KMSKS.

The protein belongs to the class-I aminoacyl-tRNA synthetase family. In terms of assembly, homodimer.

It localises to the cytoplasm. It carries out the reaction tRNA(Trp) + L-tryptophan + ATP = L-tryptophyl-tRNA(Trp) + AMP + diphosphate + H(+). Catalyzes the attachment of tryptophan to tRNA(Trp). The polypeptide is Tryptophan--tRNA ligase (Buchnera aphidicola subsp. Acyrthosiphon pisum (strain APS) (Acyrthosiphon pisum symbiotic bacterium)).